The sequence spans 808 residues: Phenylalanine--tRNA ligase beta subunit (808 aa).

Residues 40-157 (NKGATNVVVG…QSVEPGQDAL (118 aa)) form the tRNA-binding domain. One can recognise a B5 domain in the interval 411-486 (RSERVIALDL…RLYGYDELPS (76 aa)). Mg(2+) contacts are provided by aspartate 464, aspartate 470, glutamate 473, and glutamate 474. In terms of domain architecture, FDX-ACB spans 714–807 (PRYPAITRDM…VQKQTGAVLR (94 aa)).

It belongs to the phenylalanyl-tRNA synthetase beta subunit family. Type 1 subfamily. As to quaternary structure, tetramer of two alpha and two beta subunits. It depends on Mg(2+) as a cofactor.

Its subcellular location is the cytoplasm. It catalyses the reaction tRNA(Phe) + L-phenylalanine + ATP = L-phenylalanyl-tRNA(Phe) + AMP + diphosphate + H(+). This chain is Phenylalanine--tRNA ligase beta subunit, found in Shouchella clausii (strain KSM-K16) (Alkalihalobacillus clausii).